Here is a 624-residue protein sequence, read N- to C-terminus: Glyco-Gag protein (624 aa).

The Cytoplasmic portion of the chain corresponds to 1 to 63; it reads LGDVPGTSGA…FLPSVWNRSR (63 aa). A helical transmembrane segment spans residues 64–86; that stretch reads AARLVCCSIVLCCLCLAVFLYWS. At 87-624 the chain is on the extracellular side; sequence ENMGQTVTTP…PQTSLLALDD (538 aa). A glycan (N-linked (GlcNAc...) asparagine; by host) is linked at Asn-113. Pro residues-rich tracts occupy residues 200-209 and 247-258; these read PSLLPEPPLS and DPPPYRDPGPPP. Disordered stretches follow at residues 200 to 284 and 290 to 309; these read PSLL…ASRL and LPVA…GGNG. N-linked (GlcNAc...) asparagine; by host glycosylation occurs at Asn-478. 2 stretches are compositionally biased toward basic and acidic residues: residues 520-552 and 572-605; these read RETP…EKER and KQDR…DCPK. Residues 520–624 are disordered; the sequence is RETPEEREER…PQTSLLALDD (105 aa).

In terms of processing, glycosylated by host. Post-translationally, cleaved by host near the middle of the molecule, releasing the c-terminal half containing capsid and nucleoprotein domains op GAG.

The protein resides in the host cell membrane. Its function is as follows. Plays a role in viral particle release. Presumably acts by facilitating the fission of the virion bud at the cell surface. May prevent the antiviral activity of murine APOBEC3. This Mus musculus (Mouse) protein is Glyco-Gag protein.